Consider the following 593-residue polypeptide: Inactive metallocarboxypeptidase ECM14 (593 aa).

The first 22 residues, 1-22, serve as a signal peptide directing secretion; it reads MHVTVQLSLLLSLASSLPLVSA. A propeptide spanning residues 23–175 is cleaved from the precursor; that stretch reads IPQHDGQAYT…QAIYESYPKN (153 aa). 2 disordered regions span residues 75–98 and 172–202; these read VPQR…KAPA and YPKN…SQPH. Residues 78-88 show a composition bias toward basic and acidic residues; that stretch reads RGKDSETKTGK. Residues 188–199 show a composition bias toward polar residues; that stretch reads RRFSPSASTPES. The region spanning 211-537 is the Peptidase M14 domain; that stretch reads DYQPLSVLLP…HAVVAMGKFL (327 aa). Zn(2+) contacts are provided by H276 and E279. Residues 276-279, R334, and 351-352 contribute to the substrate site; these read HARE and DR. A disulfide bridge links C345 with C368. Residue N361 is glycosylated (N-linked (GlcNAc...) asparagine). H408 serves as a coordination point for Zn(2+). 409-410 provides a ligand contact to substrate; it reads SY. The disordered stretch occupies residues 548-593; sequence DEPHAGEQTQDNSYDEDGDNLFRAQGGDPQVRFTRRNIGAHDDDSE.

This sequence belongs to the peptidase M14 family. Requires Zn(2+) as cofactor.

It is found in the vacuole. It localises to the secreted. Its function is as follows. Inactive carboxypeptidase that may play a role in cell wall organization and biogenesis. In Arthroderma otae (strain ATCC MYA-4605 / CBS 113480) (Microsporum canis), this protein is Inactive metallocarboxypeptidase ECM14 (ECM14).